A 44-amino-acid chain; its full sequence is Protein PsbN (44 aa).

Residues 6–26 form a helical membrane-spanning segment; that stretch reads FFFTFFLWFLLLSVTGYSVYV.

This sequence belongs to the PsbN family.

The protein localises to the plastid. The protein resides in the chloroplast thylakoid membrane. Its function is as follows. May play a role in photosystem I and II biogenesis. The polypeptide is Protein PsbN (Chlamydomonas reinhardtii (Chlamydomonas smithii)).